Consider the following 253-residue polypeptide: uncharacterized protein (253 aa).

10–34 (LVTGASSGLGRGLALWLARRGVRVF) lines the NADP(+) pocket. Residue Ser142 coordinates substrate. Tyr155 serves as the catalytic Proton acceptor.

Belongs to the short-chain dehydrogenases/reductases (SDR) family.

This is an uncharacterized protein from Myxococcus xanthus (strain DK1622).